The chain runs to 371 residues: Queuine tRNA-ribosyltransferase (371 aa).

The active-site Proton acceptor is the Asp90. Substrate is bound by residues Asp90 to Phe94, Asp144, Gln185, and Gly212. The segment at Gly243–Asp249 is RNA binding. Asp262 (nucleophile) is an active-site residue. Residues Thr267–Arg271 form an RNA binding; important for wobble base 34 recognition region. Residues Cys300, Cys302, Cys305, and His331 each coordinate Zn(2+).

The protein belongs to the queuine tRNA-ribosyltransferase family. As to quaternary structure, homodimer. Within each dimer, one monomer is responsible for RNA recognition and catalysis, while the other monomer binds to the replacement base PreQ1. It depends on Zn(2+) as a cofactor.

The enzyme catalyses 7-aminomethyl-7-carbaguanine + guanosine(34) in tRNA = 7-aminomethyl-7-carbaguanosine(34) in tRNA + guanine. The protein operates within tRNA modification; tRNA-queuosine biosynthesis. Catalyzes the base-exchange of a guanine (G) residue with the queuine precursor 7-aminomethyl-7-deazaguanine (PreQ1) at position 34 (anticodon wobble position) in tRNAs with GU(N) anticodons (tRNA-Asp, -Asn, -His and -Tyr). Catalysis occurs through a double-displacement mechanism. The nucleophile active site attacks the C1' of nucleotide 34 to detach the guanine base from the RNA, forming a covalent enzyme-RNA intermediate. The proton acceptor active site deprotonates the incoming PreQ1, allowing a nucleophilic attack on the C1' of the ribose to form the product. After dissociation, two additional enzymatic reactions on the tRNA convert PreQ1 to queuine (Q), resulting in the hypermodified nucleoside queuosine (7-(((4,5-cis-dihydroxy-2-cyclopenten-1-yl)amino)methyl)-7-deazaguanosine). This Acidithiobacillus ferrooxidans (strain ATCC 23270 / DSM 14882 / CIP 104768 / NCIMB 8455) (Ferrobacillus ferrooxidans (strain ATCC 23270)) protein is Queuine tRNA-ribosyltransferase.